The sequence spans 383 residues: Glutamyl-tRNA reductase (383 aa).

Residues 38–41, serine 82, 87–89, and glutamine 93 contribute to the substrate site; these read TCNR and EDQ. Cysteine 39 acts as the Nucleophile in catalysis. An NADP(+)-binding site is contributed by 161–166; the sequence is GAGEIA.

It belongs to the glutamyl-tRNA reductase family. In terms of assembly, homodimer.

The enzyme catalyses (S)-4-amino-5-oxopentanoate + tRNA(Glu) + NADP(+) = L-glutamyl-tRNA(Glu) + NADPH + H(+). It functions in the pathway porphyrin-containing compound metabolism; protoporphyrin-IX biosynthesis; 5-aminolevulinate from L-glutamyl-tRNA(Glu): step 1/2. Its function is as follows. Catalyzes the NADPH-dependent reduction of glutamyl-tRNA(Glu) to glutamate 1-semialdehyde (GSA). The protein is Glutamyl-tRNA reductase of Methanococcus aeolicus (strain ATCC BAA-1280 / DSM 17508 / OCM 812 / Nankai-3).